Reading from the N-terminus, the 183-residue chain is Holliday junction branch migration complex subunit RuvA (183 aa).

The segment at 1–64 (MIVAIEGIVS…EDSHKLYGFL (64 aa)) is domain I. The interval 65–138 (DTNEQRMFEL…SDAKINIENS (74 aa)) is domain II. A region of interest (flexible linker) is located at residue Ser-138. A domain III region spans residues 138 to 183 (SNQDHAQALAALLSLGFKQENILKVLRTCESQNTSELIKEALKKLA).

It belongs to the RuvA family. As to quaternary structure, homotetramer. Forms an RuvA(8)-RuvB(12)-Holliday junction (HJ) complex. HJ DNA is sandwiched between 2 RuvA tetramers; dsDNA enters through RuvA and exits via RuvB. An RuvB hexamer assembles on each DNA strand where it exits the tetramer. Each RuvB hexamer is contacted by two RuvA subunits (via domain III) on 2 adjacent RuvB subunits; this complex drives branch migration. In the full resolvosome a probable DNA-RuvA(4)-RuvB(12)-RuvC(2) complex forms which resolves the HJ.

It localises to the cytoplasm. Functionally, the RuvA-RuvB-RuvC complex processes Holliday junction (HJ) DNA during genetic recombination and DNA repair, while the RuvA-RuvB complex plays an important role in the rescue of blocked DNA replication forks via replication fork reversal (RFR). RuvA specifically binds to HJ cruciform DNA, conferring on it an open structure. The RuvB hexamer acts as an ATP-dependent pump, pulling dsDNA into and through the RuvAB complex. HJ branch migration allows RuvC to scan DNA until it finds its consensus sequence, where it cleaves and resolves the cruciform DNA. The polypeptide is Holliday junction branch migration complex subunit RuvA (Campylobacter lari (strain RM2100 / D67 / ATCC BAA-1060)).